We begin with the raw amino-acid sequence, 61 residues long: uncharacterized protein (61 aa).

This is an uncharacterized protein from Escherichia coli (strain K12).